We begin with the raw amino-acid sequence, 219 residues long: 7-cyano-7-deazaguanine synthase (219 aa).

An ATP-binding site is contributed by 10 to 20 (FSGGQDSTTCL). The Zn(2+) site is built by Cys188, Cys197, Cys200, and Cys203.

This sequence belongs to the QueC family. In terms of assembly, homodimer. Zn(2+) is required as a cofactor.

It catalyses the reaction 7-carboxy-7-deazaguanine + NH4(+) + ATP = 7-cyano-7-deazaguanine + ADP + phosphate + H2O + H(+). It functions in the pathway purine metabolism; 7-cyano-7-deazaguanine biosynthesis. Its function is as follows. Catalyzes the ATP-dependent conversion of 7-carboxy-7-deazaguanine (CDG) to 7-cyano-7-deazaguanine (preQ(0)). This Clostridium botulinum (strain Loch Maree / Type A3) protein is 7-cyano-7-deazaguanine synthase.